The primary structure comprises 256 residues: Ubiquinone/menaquinone biosynthesis C-methyltransferase UbiE (256 aa).

Residues T79, D100, and 128-129 (DA) contribute to the S-adenosyl-L-methionine site.

Belongs to the class I-like SAM-binding methyltransferase superfamily. MenG/UbiE family.

It catalyses the reaction a 2-demethylmenaquinol + S-adenosyl-L-methionine = a menaquinol + S-adenosyl-L-homocysteine + H(+). It carries out the reaction a 2-methoxy-6-(all-trans-polyprenyl)benzene-1,4-diol + S-adenosyl-L-methionine = a 5-methoxy-2-methyl-3-(all-trans-polyprenyl)benzene-1,4-diol + S-adenosyl-L-homocysteine + H(+). It participates in quinol/quinone metabolism; menaquinone biosynthesis; menaquinol from 1,4-dihydroxy-2-naphthoate: step 2/2. It functions in the pathway cofactor biosynthesis; ubiquinone biosynthesis. In terms of biological role, methyltransferase required for the conversion of demethylmenaquinol (DMKH2) to menaquinol (MKH2) and the conversion of 2-polyprenyl-6-methoxy-1,4-benzoquinol (DDMQH2) to 2-polyprenyl-3-methyl-6-methoxy-1,4-benzoquinol (DMQH2). This is Ubiquinone/menaquinone biosynthesis C-methyltransferase UbiE from Pseudomonas fluorescens (strain SBW25).